The primary structure comprises 475 residues: Ribulose bisphosphate carboxylase large chain (475 aa).

Residues 1 to 2 (MS) constitute a propeptide that is removed on maturation. Residue P3 is modified to N-acetylproline. K14 bears the N6,N6,N6-trimethyllysine mark. Residues N123 and T173 each coordinate substrate. K175 functions as the Proton acceptor in the catalytic mechanism. Residue K177 coordinates substrate. 3 residues coordinate Mg(2+): K201, D203, and E204. Position 201 is an N6-carboxylysine (K201). H294 functions as the Proton acceptor in the catalytic mechanism. Residues R295, H327, and S379 each coordinate substrate.

Belongs to the RuBisCO large chain family. Type I subfamily. In terms of assembly, heterohexadecamer of 8 large chains and 8 small chains; disulfide-linked. The disulfide link is formed within the large subunit homodimers. It depends on Mg(2+) as a cofactor. The disulfide bond which can form in the large chain dimeric partners within the hexadecamer appears to be associated with oxidative stress and protein turnover.

Its subcellular location is the plastid. It localises to the chloroplast. The catalysed reaction is 2 (2R)-3-phosphoglycerate + 2 H(+) = D-ribulose 1,5-bisphosphate + CO2 + H2O. It carries out the reaction D-ribulose 1,5-bisphosphate + O2 = 2-phosphoglycolate + (2R)-3-phosphoglycerate + 2 H(+). Its function is as follows. RuBisCO catalyzes two reactions: the carboxylation of D-ribulose 1,5-bisphosphate, the primary event in carbon dioxide fixation, as well as the oxidative fragmentation of the pentose substrate in the photorespiration process. Both reactions occur simultaneously and in competition at the same active site. The protein is Ribulose bisphosphate carboxylase large chain of Pinus pinea (Italian stone pine).